A 338-amino-acid chain; its full sequence is Ribosomal RNA large subunit methyltransferase F (338 aa).

The segment at 1–21 (MTQKKNKPTQKKKGLHPRNPH) is disordered.

Belongs to the methyltransferase superfamily. METTL16/RlmF family.

The protein resides in the cytoplasm. The catalysed reaction is adenosine(1618) in 23S rRNA + S-adenosyl-L-methionine = N(6)-methyladenosine(1618) in 23S rRNA + S-adenosyl-L-homocysteine + H(+). Specifically methylates the adenine in position 1618 of 23S rRNA. The chain is Ribosomal RNA large subunit methyltransferase F from Photobacterium profundum (strain SS9).